Consider the following 365-residue polypeptide: tRNA/tmRNA (uracil-C(5))-methyltransferase (365 aa).

Positions 189, 217, 222, 238, and 298 each coordinate S-adenosyl-L-methionine. The active-site Nucleophile is the Cys-323. Glu-357 (proton acceptor) is an active-site residue.

The protein belongs to the class I-like SAM-binding methyltransferase superfamily. RNA M5U methyltransferase family. TrmA subfamily.

It catalyses the reaction uridine(54) in tRNA + S-adenosyl-L-methionine = 5-methyluridine(54) in tRNA + S-adenosyl-L-homocysteine + H(+). The catalysed reaction is uridine(341) in tmRNA + S-adenosyl-L-methionine = 5-methyluridine(341) in tmRNA + S-adenosyl-L-homocysteine + H(+). In terms of biological role, dual-specificity methyltransferase that catalyzes the formation of 5-methyluridine at position 54 (m5U54) in all tRNAs, and that of position 341 (m5U341) in tmRNA (transfer-mRNA). This chain is tRNA/tmRNA (uracil-C(5))-methyltransferase, found in Shewanella denitrificans (strain OS217 / ATCC BAA-1090 / DSM 15013).